Reading from the N-terminus, the 242-residue chain is Ribonuclease PH (242 aa).

Phosphate is bound by residues Arg89 and 127-129; that span reads GTR.

This sequence belongs to the RNase PH family. As to quaternary structure, homohexameric ring arranged as a trimer of dimers.

The enzyme catalyses tRNA(n+1) + phosphate = tRNA(n) + a ribonucleoside 5'-diphosphate. In terms of biological role, phosphorolytic 3'-5' exoribonuclease that plays an important role in tRNA 3'-end maturation. Removes nucleotide residues following the 3'-CCA terminus of tRNAs; can also add nucleotides to the ends of RNA molecules by using nucleoside diphosphates as substrates, but this may not be physiologically important. Probably plays a role in initiation of 16S rRNA degradation (leading to ribosome degradation) during starvation. The chain is Ribonuclease PH from Neisseria meningitidis serogroup A / serotype 4A (strain DSM 15465 / Z2491).